A 363-amino-acid chain; its full sequence is 3-dehydroquinate synthase (363 aa).

NAD(+)-binding positions include 109–113, 133–134, lysine 146, and lysine 155; these read GASTD and TT. 3 residues coordinate Zn(2+): glutamate 188, histidine 251, and histidine 267.

It belongs to the sugar phosphate cyclases superfamily. Dehydroquinate synthase family. The cofactor is NAD(+). Co(2+) is required as a cofactor. Requires Zn(2+) as cofactor.

It localises to the cytoplasm. The catalysed reaction is 7-phospho-2-dehydro-3-deoxy-D-arabino-heptonate = 3-dehydroquinate + phosphate. It functions in the pathway metabolic intermediate biosynthesis; chorismate biosynthesis; chorismate from D-erythrose 4-phosphate and phosphoenolpyruvate: step 2/7. Catalyzes the conversion of 3-deoxy-D-arabino-heptulosonate 7-phosphate (DAHP) to dehydroquinate (DHQ). This is 3-dehydroquinate synthase from Streptomyces coelicolor (strain ATCC BAA-471 / A3(2) / M145).